The primary structure comprises 299 residues: Transcription factor srbB (299 aa).

Disordered regions lie at residues 1 to 33 (MAYN…DPLS) and 81 to 204 (ISGF…NAAK). The segment covering 161–170 (PVTSQATTSP) has biased composition (low complexity). Residues 188-199 (RSLSTDSQTATG) are compositionally biased toward polar residues. The interval 203–216 (AKRAAHNIIEKRYR) is basic motif. The region spanning 203–264 (AKRAAHNIIE…TNAIAYMQEL (62 aa)) is the bHLH domain. Residues 217-264 (TNMNAKFVALEKAMSGSGVQKPTKGGSGPASLKKSEILTNAIAYMQEL) are helix-loop-helix motif. The stretch at 254–281 (LTNAIAYMQELQDQNAALQKELALLKQN) forms a coiled coil.

The protein localises to the nucleus. Its function is as follows. Key transcription factors critical for hypoxia adaptation and virulence. Plays a major role in regulation of heme biosynthesis and carbohydrate metabolism early in the response to hypoxia. This is Transcription factor srbB from Aspergillus fumigatus (strain ATCC MYA-4609 / CBS 101355 / FGSC A1100 / Af293) (Neosartorya fumigata).